The following is a 1859-amino-acid chain: Retinitis pigmentosa 1-like 1 protein (1859 aa).

Disordered regions lie at residues 1 to 22 (MNSTPGDTRDAPAPSHPAPSHR) and 115 to 154 (RKPPKTSREPGRLQRKSPSAGQAQVFQGGHEAPETSYSWK). The region spanning 42-126 (KKITFLKRGD…PPKTSREPGR (85 aa)) is the Doublecortin 1 domain. Positions 115–126 (RKPPKTSREPGR) are enriched in basic and acidic residues. Residues 130 to 139 (KSPSAGQAQV) show a composition bias toward polar residues. Residues 160–239 (RRLTLVKNGD…NEAFRCLEME (80 aa)) form the Doublecortin 2 domain. Disordered stretches follow at residues 263-301 (PNAKQSVIHSRGRSGGKLRQVSLTSERSGLSDHPASGHR), 426-445 (IWRNPLATPEGTGPTPRRRW), 457-593 (WRQE…TQSH), 700-750 (MPQE…TSKA), 868-920 (CFGR…TPSA), 952-997 (NTEV…GVLS), 1152-1211 (TEDF…YPEL), 1227-1255 (ATGGEETGKGGRKQTWGNAPEQSVHSTML), 1298-1350 (GSQD…RVRE), and 1567-1859 (LQSK…DLDF). Residues 457–472 (WRQEANHRKGHDKDNL) show a composition bias toward basic and acidic residues. 2 stretches are compositionally biased toward polar residues: residues 499-512 (GSDTLHPVSSASSH) and 535-551 (PETQSTERALSDTSVSA). A compositionally biased stretch (low complexity) spans 716–728 (SPSNSPSAGNQAS). Over residues 734–750 (PFSSSLDLQEPQATSKA) the composition is skewed to polar residues. Residues 870–883 (GRESASNGSTSSGH) are compositionally biased toward low complexity. Polar residues-rich tracts occupy residues 1241–1252 (TWGNAPEQSVHS), 1336–1345 (ESPQHFSESN), and 1567–1577 (LQSKKGGSSNR). Over residues 1616 to 1632 (GEGKQRLRAEEDPEILK) the composition is skewed to basic and acidic residues. Residues 1641–1652 (PEEDEATEEDGE) are compositionally biased toward acidic residues. The span at 1700–1720 (EASRERQQEVEGRHQDVKEDS) shows a compositional bias: basic and acidic residues. Residues 1756-1778 (SHHTACSSRALSLDNSSQVSQKG) show a composition bias toward polar residues.

In terms of assembly, interacts with RP1; has a synergistic effect with RP1 in photoreceptor differentiation. Retinal-specific; expressed in photoreceptor.

Its subcellular location is the cytoplasm. It localises to the cytoskeleton. The protein localises to the cilium axoneme. The protein resides in the cell projection. It is found in the cilium. Its subcellular location is the photoreceptor outer segment. Required for the differentiation of photoreceptor cells. Plays a role in the organization of outer segment of rod and cone photoreceptors. The sequence is that of Retinitis pigmentosa 1-like 1 protein (Rp1l1) from Mus musculus (Mouse).